A 228-amino-acid chain; its full sequence is Ribonuclease 3 (228 aa).

Residues 2-130 form the RNase III domain; the sequence is LTYLEQKINY…LLAAVYLDGG (129 aa). Glutamate 43 is a Mg(2+) binding site. Aspartate 47 is a catalytic residue. Mg(2+) contacts are provided by aspartate 116 and glutamate 119. The active site involves glutamate 119. A DRBM domain is found at 157–226; sequence DYKTRLQEVV…AMEALSKLGI (70 aa).

The protein belongs to the ribonuclease III family. As to quaternary structure, homodimer. Requires Mg(2+) as cofactor.

The protein resides in the cytoplasm. The catalysed reaction is Endonucleolytic cleavage to 5'-phosphomonoester.. Its function is as follows. Digests double-stranded RNA. Involved in the processing of primary rRNA transcript to yield the immediate precursors to the large and small rRNAs (23S and 16S). Processes some mRNAs, and tRNAs when they are encoded in the rRNA operon. Processes pre-crRNA and tracrRNA of type II CRISPR loci if present in the organism. The polypeptide is Ribonuclease 3 (Caldanaerobacter subterraneus subsp. tengcongensis (strain DSM 15242 / JCM 11007 / NBRC 100824 / MB4) (Thermoanaerobacter tengcongensis)).